The following is a 262-amino-acid chain: Nurim (262 aa).

Over 1–4 (MAPA) the chain is Nuclear. The chain crosses the membrane as a helical span at residues 5-28 (LLLVPAALASFILAFGTGVEFVRF). Over 29 to 58 (TSLRPLLGGIPESGGPDARQGWLAALQDRS) the chain is Perinuclear space. A helical transmembrane segment spans residues 59–80 (ILAPLAWDLGLLLLFVGQHSLM). Topologically, residues 81 to 97 (AAERVKAWTSRYFGVLQ) are nuclear. Residues 98–114 (RSLYVACTALALQLVMR) traverse the membrane as a helical segment. The Perinuclear space portion of the chain corresponds to 115-133 (YWEPIPKGPVLWEARAEPW). The helical transmembrane segment at 134–164 (ATWVPLLCFVLHVISWLLIFSILLVFDYAEL) threads the bilayer. Residues 165-191 (MGLKQVYYHVLGLGEPLALKSPRALRL) lie on the Nuclear side of the membrane. Residues 192–210 (FSHLRHPVCVELLTVLWVV) traverse the membrane as a helical segment. Over 211–216 (PTLGTD) the chain is Perinuclear space. Residues 217 to 234 (RLLLAFLLTLYLGLAHGL) form a helical membrane-spanning segment. Over 235-262 (DQQDLRYLRAQLQRKLHLLSRPQDGEAE) the chain is Nuclear.

Belongs to the nurim family.

It localises to the nucleus inner membrane. The polypeptide is Nurim (NRM) (Pan troglodytes (Chimpanzee)).